We begin with the raw amino-acid sequence, 236 residues long: tRNA1(Val) (adenine(37)-N6)-methyltransferase (236 aa).

The protein belongs to the methyltransferase superfamily. tRNA (adenine-N(6)-)-methyltransferase family.

It localises to the cytoplasm. The catalysed reaction is adenosine(37) in tRNA1(Val) + S-adenosyl-L-methionine = N(6)-methyladenosine(37) in tRNA1(Val) + S-adenosyl-L-homocysteine + H(+). Its function is as follows. Specifically methylates the adenine in position 37 of tRNA(1)(Val) (anticodon cmo5UAC). This Actinobacillus pleuropneumoniae serotype 5b (strain L20) protein is tRNA1(Val) (adenine(37)-N6)-methyltransferase.